The chain runs to 515 residues: Vacuolar fusion protein CCZ1 homolog A (515 aa).

It belongs to the CCZ1 family. As to quaternary structure, interacts with MON1.

It is found in the endosome. It localises to the prevacuolar compartment. Plays an important role in membrane trafficking through the secretory apparatus. In complex with MON1, acts as a guanine exchange factor (GEF) for RABG3F of the Rab7 protein family. Promotes the exchange of GDP to GTP, converting RABG3F from an inactive GDP-bound form into an active GTP-bound form. The RABG3F active form is involved in protein trafficking from prevacuolar compartments (PVCs) to vacuoles. May serve as a linker between Rab5 and Rab7 protein families in PVCs and mediate PVC maturation. In Arabidopsis thaliana (Mouse-ear cress), this protein is Vacuolar fusion protein CCZ1 homolog A.